A 314-amino-acid chain; its full sequence is Ribosomal protein uL3 glutamine methyltransferase (314 aa).

The protein belongs to the protein N5-glutamine methyltransferase family. PrmB subfamily.

It catalyses the reaction L-glutaminyl-[ribosomal protein uL3] + S-adenosyl-L-methionine = N(5)-methyl-L-glutaminyl-[ribosomal protein uL3] + S-adenosyl-L-homocysteine + H(+). Its function is as follows. Methylates large ribosomal subunit protein uL3 on a specific glutamine residue. This chain is Ribosomal protein uL3 glutamine methyltransferase, found in Shewanella oneidensis (strain ATCC 700550 / JCM 31522 / CIP 106686 / LMG 19005 / NCIMB 14063 / MR-1).